Consider the following 364-residue polypeptide: Doublecortin domain-containing protein 2C (364 aa).

Doublecortin domains follow at residues 16-98 (KTIV…LDYI) and 136-217 (RHIN…FPYW). The disordered stretch occupies residues 233-255 (VEKNSQRKKKVDSKGKEPCKYDG).

Expressed in testis and spermatozoa (at protein level).

It is found in the cell projection. Its subcellular location is the cilium. The protein localises to the flagellum. It localises to the cytoplasm. This is Doublecortin domain-containing protein 2C from Homo sapiens (Human).